A 418-amino-acid chain; its full sequence is Glutamyl-tRNA(Gln) amidotransferase subunit D (418 aa).

An Asparaginase/glutaminase domain is found at 74–405 (KNISILSTGG…EEAKELMPKN (332 aa)). Active-site residues include threonine 84, threonine 160, aspartate 161, and lysine 237.

It belongs to the asparaginase 1 family. GatD subfamily. In terms of assembly, heterodimer of GatD and GatE.

The enzyme catalyses L-glutamyl-tRNA(Gln) + L-glutamine + ATP + H2O = L-glutaminyl-tRNA(Gln) + L-glutamate + ADP + phosphate + H(+). In terms of biological role, allows the formation of correctly charged Gln-tRNA(Gln) through the transamidation of misacylated Glu-tRNA(Gln) in organisms which lack glutaminyl-tRNA synthetase. The reaction takes place in the presence of glutamine and ATP through an activated gamma-phospho-Glu-tRNA(Gln). The GatDE system is specific for glutamate and does not act on aspartate. This chain is Glutamyl-tRNA(Gln) amidotransferase subunit D, found in Methanococcus maripaludis (strain C6 / ATCC BAA-1332).